We begin with the raw amino-acid sequence, 483 residues long: Regulatory protein ViaA (483 aa).

Belongs to the ViaA family. Homodimer. Interacts with RavA.

It is found in the cytoplasm. Component of the RavA-ViaA chaperone complex, which may act on the membrane to optimize the function of some of the respiratory chains. ViaA stimulates the ATPase activity of RavA. The polypeptide is Regulatory protein ViaA (Salmonella paratyphi A (strain ATCC 9150 / SARB42)).